A 100-amino-acid chain; its full sequence is MNKGELVHAVTDKAKEQLGESITKKEVDAVISAAIDCIMEVVAEGEKVTLVGFGSFEARERKEREGRNPKTGDKMLIPATKVPAFSAGKMFKDKVAPEKK.

It belongs to the bacterial histone-like protein family.

In terms of biological role, histone-like DNA-binding protein which is capable of wrapping DNA to stabilize it, and thus to prevent its denaturation under extreme environmental conditions. This is DNA-binding protein HU (hup) from Synechocystis sp. (strain ATCC 27184 / PCC 6803 / Kazusa).